Consider the following 309-residue polypeptide: Carbonic anhydrase 4 (309 aa).

The first 17 residues, 1–17, serve as a signal peptide directing secretion; it reads MQLLLALLALAYVAPST. Residues 20–282 enclose the Alpha-carbonic anhydrase domain; it reads SHWCYEIQAK…LGNRQVFRSH (263 aa). 2 disulfide bridges follow: Cys23–Cys35 and Cys45–Cys226. His87 functions as the Proton donor/acceptor in the catalytic mechanism. Zn(2+) is bound by residues His114, His116, and His139. The N-linked (GlcNAc...) asparagine glycan is linked to Asn193. Residue 222–223 coordinates substrate; it reads TT. Ser281 carries the GPI-anchor amidated serine lipid modification. Residues 282–309 constitute a propeptide, removed in mature form; it reads HASGRLLSLPLPTLLVPTLTCLVASFLH.

This sequence belongs to the alpha-carbonic anhydrase family. Interacts with SLC4A4. The cofactor is Zn(2+). In terms of processing, the N-terminus is blocked. Glycosylated. In terms of tissue distribution, present in kidney and lung. Also particularly abundant in brain, muscle, heart and liver. Not detected in skin or spleen.

The protein localises to the cell membrane. The catalysed reaction is hydrogencarbonate + H(+) = CO2 + H2O. Its activity is regulated as follows. Inhibited by acetazolamide. Catalyzes the reversible hydration of carbon dioxide into bicarbonate and protons and thus is essential to maintaining intracellular and extracellular pH. May stimulate the sodium/bicarbonate transporter activity of SLC4A4 that acts in pH homeostasis. It is essential for acid overload removal from the retina and retina epithelium, and acid release in the choriocapillaris in the choroid. The polypeptide is Carbonic anhydrase 4 (Ca4) (Rattus norvegicus (Rat)).